Reading from the N-terminus, the 394-residue chain is uncharacterized protein (394 aa).

Phosphoserine occurs at positions 117 and 121. 3 disordered regions span residues 177–295 (DSDE…PGTF), 315–347 (KRSIMLPQDIDPTFPDSEPEDDGHASSTVGSLS), and 370–394 (SSEVLRNSKSPPLDIARKAVGAHRV). The span at 178–190 (SDEEDEVDDEEIE) shows a compositional bias: acidic residues. Polar residues-rich tracts occupy residues 191-207 (SFNSFSRKMQTISNSRY) and 216-230 (EKQSCSSESDRVSQI). Acidic residues-rich tracts occupy residues 231-263 (SDDEEDEEGSADEEDEEDSDVELSESSLSDDED) and 284-295 (IPDDTDFVPGTF). Residues 370-379 (SSEVLRNSKS) are compositionally biased toward polar residues. S379 carries the post-translational modification Phosphoserine.

The protein localises to the nucleus. This is an uncharacterized protein from Schizosaccharomyces pombe (strain 972 / ATCC 24843) (Fission yeast).